A 277-amino-acid chain; its full sequence is 4-hydroxy-tetrahydrodipicolinate reductase (277 aa).

NAD(+) contacts are provided by residues 11-16 and 110-112; these read GALGRM and GTT. His-166 (proton donor/acceptor) is an active-site residue. His-167 is a (S)-2,3,4,5-tetrahydrodipicolinate binding site. Lys-170 serves as the catalytic Proton donor. 176–177 lines the (S)-2,3,4,5-tetrahydrodipicolinate pocket; it reads GT.

Belongs to the DapB family.

It localises to the cytoplasm. The catalysed reaction is (S)-2,3,4,5-tetrahydrodipicolinate + NAD(+) + H2O = (2S,4S)-4-hydroxy-2,3,4,5-tetrahydrodipicolinate + NADH + H(+). It carries out the reaction (S)-2,3,4,5-tetrahydrodipicolinate + NADP(+) + H2O = (2S,4S)-4-hydroxy-2,3,4,5-tetrahydrodipicolinate + NADPH + H(+). Its pathway is amino-acid biosynthesis; L-lysine biosynthesis via DAP pathway; (S)-tetrahydrodipicolinate from L-aspartate: step 4/4. Its function is as follows. Catalyzes the conversion of 4-hydroxy-tetrahydrodipicolinate (HTPA) to tetrahydrodipicolinate. In Synechococcus sp. (strain CC9902), this protein is 4-hydroxy-tetrahydrodipicolinate reductase.